Here is a 516-residue protein sequence, read N- to C-terminus: Bifunctional purine biosynthesis protein PurH (516 aa).

An MGS-like domain is found at 1–146 (MTRLALLSVS…KNYAHVTVLS (146 aa)).

It belongs to the PurH family.

It carries out the reaction (6R)-10-formyltetrahydrofolate + 5-amino-1-(5-phospho-beta-D-ribosyl)imidazole-4-carboxamide = 5-formamido-1-(5-phospho-D-ribosyl)imidazole-4-carboxamide + (6S)-5,6,7,8-tetrahydrofolate. The enzyme catalyses IMP + H2O = 5-formamido-1-(5-phospho-D-ribosyl)imidazole-4-carboxamide. It participates in purine metabolism; IMP biosynthesis via de novo pathway; 5-formamido-1-(5-phospho-D-ribosyl)imidazole-4-carboxamide from 5-amino-1-(5-phospho-D-ribosyl)imidazole-4-carboxamide (10-formyl THF route): step 1/1. The protein operates within purine metabolism; IMP biosynthesis via de novo pathway; IMP from 5-formamido-1-(5-phospho-D-ribosyl)imidazole-4-carboxamide: step 1/1. The sequence is that of Bifunctional purine biosynthesis protein PurH from Rippkaea orientalis (strain PCC 8801 / RF-1) (Cyanothece sp. (strain PCC 8801)).